The chain runs to 487 residues: ATP-dependent RNA helicase DBP3 (487 aa).

The interval 1 to 40 is disordered; it reads MAKRSRNMESNSERSSRPKKKSKGDAKPEQPPYVQSAELD. Residues 71–98 carry the Q motif motif; sequence TAFSYLPSDSNQLYGPLEHFSKPTPIQS. One can recognise a Helicase ATP-binding domain in the interval 101-276; the sequence is WPYLFAGRDV…TTFMKEPVTV (176 aa). Position 114–121 (114–121) interacts with ATP; the sequence is AETGSGKT. A DEAD box motif is present at residues 222–225; the sequence is DEAD. In terms of domain architecture, Helicase C-terminal spans 291–456; that stretch reads RIKQIVEVVK…DIPEALLKFG (166 aa).

This sequence belongs to the DEAD box helicase family. DDX5/DBP2 subfamily.

It localises to the nucleus. The protein localises to the nucleolus. The catalysed reaction is ATP + H2O = ADP + phosphate + H(+). ATP-dependent RNA helicase required for 60S ribosomal subunit synthesis. Involved in efficient pre-rRNA processing, predominantly at site A3, which is necessary for the normal formation of 25S and 5.8S rRNAs. The protein is ATP-dependent RNA helicase DBP3 (DBP3) of Ajellomyces capsulatus (strain NAm1 / WU24) (Darling's disease fungus).